Reading from the N-terminus, the 598-residue chain is Elongation factor 4 (598 aa).

Residues 5-187 form the tr-type G domain; sequence SHIRNFSIIA…RLVATIPAPI (183 aa). Residues 17–22 and 134–137 each bind GTP; these read DHGKST and NKID.

This sequence belongs to the TRAFAC class translation factor GTPase superfamily. Classic translation factor GTPase family. LepA subfamily.

It localises to the cell inner membrane. The catalysed reaction is GTP + H2O = GDP + phosphate + H(+). Required for accurate and efficient protein synthesis under certain stress conditions. May act as a fidelity factor of the translation reaction, by catalyzing a one-codon backward translocation of tRNAs on improperly translocated ribosomes. Back-translocation proceeds from a post-translocation (POST) complex to a pre-translocation (PRE) complex, thus giving elongation factor G a second chance to translocate the tRNAs correctly. Binds to ribosomes in a GTP-dependent manner. This is Elongation factor 4 from Pseudomonas fluorescens (strain Pf0-1).